We begin with the raw amino-acid sequence, 139 residues long: Large ribosomal subunit protein uL16 (139 aa).

This sequence belongs to the universal ribosomal protein uL16 family. Part of the 50S ribosomal subunit.

Binds 23S rRNA and is also seen to make contacts with the A and possibly P site tRNAs. The chain is Large ribosomal subunit protein uL16 from Chlorobium phaeobacteroides (strain DSM 266 / SMG 266 / 2430).